The primary structure comprises 248 residues: tRNA (guanine-N(1)-)-methyltransferase (248 aa).

S-adenosyl-L-methionine contacts are provided by residues Gly116 and 135–140 (IGDFVL).

It belongs to the RNA methyltransferase TrmD family. As to quaternary structure, homodimer.

Its subcellular location is the cytoplasm. It catalyses the reaction guanosine(37) in tRNA + S-adenosyl-L-methionine = N(1)-methylguanosine(37) in tRNA + S-adenosyl-L-homocysteine + H(+). Its function is as follows. Specifically methylates guanosine-37 in various tRNAs. In Anaeromyxobacter sp. (strain Fw109-5), this protein is tRNA (guanine-N(1)-)-methyltransferase.